Here is a 453-residue protein sequence, read N- to C-terminus: Wall-associated protein (453 aa).

The N-terminal stretch at 1–29 is a signal peptide; the sequence is MKMKRKLLSLVSVLTILLGAFWVTKIVKA. Residues 331–403 are disordered; sequence GRASSRVKRQ…TASQTNVPTT (73 aa). Residues 342–403 show a composition bias toward low complexity; the sequence is ETTTVTETTT…TASQTNVPTT (62 aa). Residues 422-426 carry the LPXTG sorting signal motif; sequence LPSTG. At Thr425 the chain carries Pentaglycyl murein peptidoglycan amidated threonine. Residues 426-453 constitute a propeptide, removed by sortase; sequence GEQAGLLLTTVGLVIVAVAGVYFYRTRR.

It is found in the secreted. Its subcellular location is the cell wall. The chain is Wall-associated protein (wapA) from Streptococcus mutans serotype c (strain ATCC 700610 / UA159).